A 512-amino-acid chain; its full sequence is Serine palmitoyltransferase 3 (512 aa).

Lys345 bears the N6-(pyridoxal phosphate)lysine mark.

Belongs to the class-II pyridoxal-phosphate-dependent aminotransferase family. Heterodimer of sptl-1/sptl-3. Pyridoxal 5'-phosphate serves as cofactor.

It catalyses the reaction L-serine + hexadecanoyl-CoA + H(+) = 3-oxosphinganine + CO2 + CoA. It participates in lipid metabolism; sphingolipid metabolism. Component of the serine palmitoyltransferase (SPT) that catalyzes the first committed step in sphingolipid biosynthesis, which is the condensation of an acyl-CoA species and L-serine. The catalytic core is composed of a heterodimer of sptl-1 and sptl-2 or sptl-1 and sptl-3. Required for the specification of abicobasal polarity and development of the gut lumen. In Caenorhabditis elegans, this protein is Serine palmitoyltransferase 3 (sptl-3).